Here is a 222-residue protein sequence, read N- to C-terminus: Ribosomal RNA small subunit methyltransferase I (222 aa).

It belongs to the methyltransferase superfamily. RsmI family.

Its subcellular location is the cytoplasm. It carries out the reaction cytidine(1402) in 16S rRNA + S-adenosyl-L-methionine = 2'-O-methylcytidine(1402) in 16S rRNA + S-adenosyl-L-homocysteine + H(+). In terms of biological role, catalyzes the 2'-O-methylation of the ribose of cytidine 1402 (C1402) in 16S rRNA. The chain is Ribosomal RNA small subunit methyltransferase I from Mycoplasmopsis pulmonis (strain UAB CTIP) (Mycoplasma pulmonis).